The chain runs to 100 residues: Small ribosomal subunit protein uS14c (100 aa).

The protein belongs to the universal ribosomal protein uS14 family. Part of the 30S ribosomal subunit.

It is found in the plastid. Its subcellular location is the chloroplast. In terms of biological role, binds 16S rRNA, required for the assembly of 30S particles. This chain is Small ribosomal subunit protein uS14c, found in Oltmannsiellopsis viridis (Marine flagellate).